The primary structure comprises 200 residues: Small ribosomal subunit protein uS4c (200 aa).

Residues 90–150 (MRLDNIIFRL…NRKESVIIKN (61 aa)) enclose the S4 RNA-binding domain.

It belongs to the universal ribosomal protein uS4 family. In terms of assembly, part of the 30S ribosomal subunit. Contacts protein S5. The interaction surface between S4 and S5 is involved in control of translational fidelity.

Its subcellular location is the plastid. It localises to the chloroplast. Functionally, one of the primary rRNA binding proteins, it binds directly to 16S rRNA where it nucleates assembly of the body of the 30S subunit. In terms of biological role, with S5 and S12 plays an important role in translational accuracy. The sequence is that of Small ribosomal subunit protein uS4c (rps4) from Pellia neesiana (Liverwort).